Consider the following 312-residue polypeptide: UDP-N-acetylenolpyruvoylglucosamine reductase (312 aa).

An FAD-binding PCMH-type domain is found at 30–202 (RVGGPAQWLA…VAAQFQLEPG (173 aa)). R181 is a catalytic residue. S232 acts as the Proton donor in catalysis. E302 is an active-site residue.

The protein belongs to the MurB family. FAD serves as cofactor.

The protein localises to the cytoplasm. The catalysed reaction is UDP-N-acetyl-alpha-D-muramate + NADP(+) = UDP-N-acetyl-3-O-(1-carboxyvinyl)-alpha-D-glucosamine + NADPH + H(+). Its pathway is cell wall biogenesis; peptidoglycan biosynthesis. In terms of biological role, cell wall formation. In Synechococcus sp. (strain CC9311), this protein is UDP-N-acetylenolpyruvoylglucosamine reductase.